Reading from the N-terminus, the 325-residue chain is Glutarate 2-hydroxylase (325 aa).

3 residues coordinate Fe cation: H160, D162, and H292.

Belongs to the glutarate hydroxylase family. In terms of assembly, homotetramer. Requires Fe(2+) as cofactor.

The enzyme catalyses glutarate + 2-oxoglutarate + O2 = (S)-2-hydroxyglutarate + succinate + CO2. It participates in amino-acid degradation. In terms of biological role, acts as an alpha-ketoglutarate-dependent dioxygenase catalyzing hydroxylation of glutarate (GA) to L-2-hydroxyglutarate (L2HG). Functions in a L-lysine degradation pathway that proceeds via cadaverine, glutarate and L-2-hydroxyglutarate. This is Glutarate 2-hydroxylase from Escherichia coli O7:K1 (strain IAI39 / ExPEC).